The following is a 138-amino-acid chain: Nucleoside diphosphate kinase (138 aa).

ATP is bound by residues Lys11, Phe59, Arg87, Thr93, Arg104, and Asn114. His117 serves as the catalytic Pros-phosphohistidine intermediate.

It belongs to the NDK family. Mg(2+) is required as a cofactor.

The protein localises to the cytoplasm. It carries out the reaction a 2'-deoxyribonucleoside 5'-diphosphate + ATP = a 2'-deoxyribonucleoside 5'-triphosphate + ADP. The enzyme catalyses a ribonucleoside 5'-diphosphate + ATP = a ribonucleoside 5'-triphosphate + ADP. Functionally, major role in the synthesis of nucleoside triphosphates other than ATP. The ATP gamma phosphate is transferred to the NDP beta phosphate via a ping-pong mechanism, using a phosphorylated active-site intermediate. In Saccharolobus islandicus (strain Y.N.15.51 / Yellowstone #2) (Sulfolobus islandicus), this protein is Nucleoside diphosphate kinase.